A 204-amino-acid chain; its full sequence is 3,4-dihydroxy-2-butanone 4-phosphate synthase (204 aa).

Glu-30 contacts Mg(2+). Asp-34 contacts D-ribulose 5-phosphate. Residue Cys-59 is modified to S-glutathionyl cysteine. Residues Thr-85 and 142-146 (RRGHT) each bind D-ribulose 5-phosphate. His-145 is a binding site for Mg(2+).

In terms of assembly, homodimer. Requires Mg(2+) as cofactor. Mn(2+) is required as a cofactor. S-glutathionylation is reversible and dependent on a glutaredoxin.

It catalyses the reaction D-ribulose 5-phosphate = (2S)-2-hydroxy-3-oxobutyl phosphate + formate + H(+). The protein operates within cofactor biosynthesis; riboflavin biosynthesis; 2-hydroxy-3-oxobutyl phosphate from D-ribulose 5-phosphate: step 1/1. Catalyzes the conversion of D-ribulose 5-phosphate to formate and 3,4-dihydroxy-2-butanone 4-phosphate. This Candida albicans (strain SC5314 / ATCC MYA-2876) (Yeast) protein is 3,4-dihydroxy-2-butanone 4-phosphate synthase (RIB3).